A 228-amino-acid chain; its full sequence is Translin (228 aa).

The interval 86 to 90 (RFHEH) is DNA/RNA binding. Positions 177–198 (LDSGFRLLNLKNDSLRKRYDGL) are leucine-zipper. Lys187 is modified (N6-acetyllysine). Ser190 carries the post-translational modification Phosphoserine. At Lys199 the chain carries N6-acetyllysine.

The protein belongs to the translin family. Ring-shaped heterooctamer of six TSN and two TSNAX subunits, DNA/RNA binding occurs inside the ring.

Its subcellular location is the cytoplasm. It localises to the nucleus. Its function is as follows. DNA-binding protein that specifically recognizes consensus sequences at the breakpoint junctions in chromosomal translocations, mostly involving immunoglobulin (Ig)/T-cell receptor gene segments. Seems to recognize single-stranded DNA ends generated by staggered breaks occurring at recombination hot spots. Exhibits both single-stranded and double-stranded endoribonuclease activity. May act as an activator of RNA-induced silencing complex (RISC) by facilitating endonucleolytic cleavage of the siRNA passenger strand. The chain is Translin (Tsn) from Mus musculus (Mouse).